The sequence spans 263 residues: Endonuclease 8 (263 aa).

The Schiff-base intermediate with DNA role is filled by Pro-2. Residue Glu-3 is the Proton donor of the active site. Lys-53 (proton donor; for beta-elimination activity) is an active-site residue. DNA-binding residues include Gln-70, Arg-125, and Asn-169. An FPG-type zinc finger spans residues Lys-229–Ser-263. Arg-253 serves as the catalytic Proton donor; for delta-elimination activity.

It belongs to the FPG family. Zn(2+) serves as cofactor.

It carries out the reaction 2'-deoxyribonucleotide-(2'-deoxyribose 5'-phosphate)-2'-deoxyribonucleotide-DNA = a 3'-end 2'-deoxyribonucleotide-(2,3-dehydro-2,3-deoxyribose 5'-phosphate)-DNA + a 5'-end 5'-phospho-2'-deoxyribonucleoside-DNA + H(+). Its function is as follows. Involved in base excision repair of DNA damaged by oxidation or by mutagenic agents. Acts as a DNA glycosylase that recognizes and removes damaged bases. Has a preference for oxidized pyrimidines, such as thymine glycol, 5,6-dihydrouracil and 5,6-dihydrothymine. Has AP (apurinic/apyrimidinic) lyase activity and introduces nicks in the DNA strand. Cleaves the DNA backbone by beta-delta elimination to generate a single-strand break at the site of the removed base with both 3'- and 5'-phosphates. This Pectobacterium atrosepticum (strain SCRI 1043 / ATCC BAA-672) (Erwinia carotovora subsp. atroseptica) protein is Endonuclease 8.